Here is a 78-residue protein sequence, read N- to C-terminus: Large ribosomal subunit protein bL28 (78 aa).

The segment at Met1–His20 is disordered.

It belongs to the bacterial ribosomal protein bL28 family.

The polypeptide is Large ribosomal subunit protein bL28 (Actinobacillus succinogenes (strain ATCC 55618 / DSM 22257 / CCUG 43843 / 130Z)).